Reading from the N-terminus, the 331-residue chain is Small ribosomal subunit protein uS2 (331 aa).

This sequence belongs to the universal ribosomal protein uS2 family.

This chain is Small ribosomal subunit protein uS2, found in Bradyrhizobium diazoefficiens (strain JCM 10833 / BCRC 13528 / IAM 13628 / NBRC 14792 / USDA 110).